The sequence spans 235 residues: MGNKSKAYKAAAEKIDKGRLYTPLKAAELVKETSSKNCDATVDVAIRLGVDPRKADQLVRGTVSLPNGTGKSVRVAVFAEGEKATEAQAAGADIVGTTELIEQITAGTIEFDVAIATPDQMAKVGRVARVLGPRGLMPNPKTGTVTNDVAKAIAEVKGGKISFRVDKASNLHAIIGKASFDAEKLAENYGALLDEINRIKPSSAKGIYVKKVTLTSTFGPGVPVDPSIQKNYTQA.

Belongs to the universal ribosomal protein uL1 family. As to quaternary structure, part of the 50S ribosomal subunit.

Functionally, binds directly to 23S rRNA. The L1 stalk is quite mobile in the ribosome, and is involved in E site tRNA release. Protein L1 is also a translational repressor protein, it controls the translation of the L11 operon by binding to its mRNA. The sequence is that of Large ribosomal subunit protein uL1 from Corynebacterium diphtheriae (strain ATCC 700971 / NCTC 13129 / Biotype gravis).